The chain runs to 373 residues: 3-isopropylmalate dehydrogenase AMT6 (373 aa).

77–79 (VGG) contacts NADP(+). The substrate site is built by arginine 97 and arginine 136. Mg(2+)-binding residues include aspartate 227, aspartate 252, and aspartate 256. 284-289 (SRIRGL) is an NADP(+) binding site.

It belongs to the isocitrate and isopropylmalate dehydrogenases family. In terms of assembly, homodimer. The cofactor is Mg(2+). Mn(2+) serves as cofactor.

It carries out the reaction (2R,3S)-3-isopropylmalate + NAD(+) = 4-methyl-2-oxopentanoate + CO2 + NADH. Its pathway is amino-acid biosynthesis; L-leucine biosynthesis; L-leucine from 3-methyl-2-oxobutanoate: step 3/4. It participates in mycotoxin biosynthesis. In terms of biological role, 3-isopropylmalate dehydrogenase; part of the gene clusters that mediate the biosynthesis of AM-toxins, host-selective toxins (HSTs) causing Alternaria blotch on apple, a worldwide distributed disease. AM-toxins are cyclic depsipeptides containing the 3 residues 2-hydroxy-isovaleric acid (2-HIV), dehydroalanine, L-alanine which are common for all 3 AM-toxins I to III. The fourth precursor is L-alpha-amino-methoxyphenyl-valeric acid (L-Amv) for AM-toxin I, L-alpha-amino-phenyl-valeric acid (L-Apv) for AM-toxin II, and L-alpha-amino-hydroxyphenyl-valeric acid (L-Ahv) for AM-toxin III. AM-toxins have two target sites for affecting susceptible apple cells; they cause invagination of the plasma membrane and electrolyte loss and chloroplast disorganization. The non-ribosomal peptide synthetase AMT1 contains 4 catalytic modules and is responsible for activation of each residue in AM-toxin. The aldo-keto reductase AMT2 catalyzes the conversion of 2-keto-isovaleric acid (2-KIV) to 2-hydroxy-isovaleric acid (2-HIV), one of the precursor residues incorporated by AMT1 during AM-toxin biosynthesis, by reduction of its ketone to an alcohol. The cytochrome P450 monooxygenase AMT3 and the thioesterase AMT4 are also important for AM-toxin production, but their exact function within the AM-toxin biosynthesis are not known yet. Up to 21 proteins (including AMT1 to AMT4) are predicted to be involved in AM-toxin biosynthesis since their expression ishighly up-regulated in AM-toxin-producing cultures. This is 3-isopropylmalate dehydrogenase AMT6 from Alternaria alternata (Alternaria rot fungus).